A 245-amino-acid polypeptide reads, in one-letter code: Peroxisome biogenesis protein 19-2 (245 aa).

The segment at 17 to 106 (ALDDFKDLNL…LSSKQQPTGS (90 aa)) is disordered. Basic and acidic residues-rich tracts occupy residues 33–44 (VKKEEGDKKETE) and 71–92 (AKED…ETVK). Residues 96–105 (SLSSKQQPTG) are compositionally biased toward polar residues. Residue Cys242 is modified to Cysteine methyl ester. Cys242 is lipidated: S-farnesyl cysteine. A propeptide spans 243–245 (CVM) (removed in mature form).

This sequence belongs to the peroxin-19 family. Dimer. Interacts with PEX10 (via C-terminus). In terms of processing, may be farnesylated. Expressed in roots, leaves, flowers, siliques and stems. Highest expression in roots and leaves.

The protein localises to the cytoplasm. It is found in the peroxisome membrane. In terms of biological role, contributes to morphology determination of peroxisomes, but not to import of peroxisomal matrix proteins. Required for proper post-translational import and stabilization of peroxisomal membrane proteins (PMPs). Acts as a cytosolic import receptor for PMPs and delivers them to the docking factor PEX3 at the peroxisomal membrane for subsequent insertion into the membrane. Acts as a chaperone in stabilizing or maintaining PMPs in the lipid bilayer. The chain is Peroxisome biogenesis protein 19-2 (PEX19-2) from Arabidopsis thaliana (Mouse-ear cress).